The sequence spans 412 residues: MTPTKPKVYIVGVGMTKFCKPGSVPGWDYPDMVKEAVTTALDDCKMKYSDIQQATVGYLFGGTCCGQRALYEVGLTGIPIFNVNNACASGSSGLFLGKQIIESGNSDVVLCAGFERMAPGSLENLAAPIDDRALSVDKHISVMSETYGLEPAPMTAQMFGNAAKEHMEKYGSKREHYAKIAYKNHLHSVHNPKSQFTKEFSLDQVINARKIYDFMGLLECSPTSDGAAAAVLVSEKFLEKNPRLKAQAVEIVGLKLGTDEPSVFAENSNIKMIGFDMIQKLAKQLWAETKLTPNDVQVIELHDCFAPNELITYEAIGLCPVGQGHHIVDRNDNTYGGKWVINPSGGLISKGHPIGATGVAQAVELSNQLRGKCGKRQVPNCKVAMQHNIGIGGAGVVGLYRLGFPGAAQSKI.

The Microbody targeting signal motif lies at S410–I412.

It belongs to the thiolase-like superfamily. Thiolase family. In terms of tissue distribution, expressed in intestine, hypodermis and body-wall muscle.

It localises to the peroxisome. It carries out the reaction choloyl-CoA + propanoyl-CoA = 3alpha,7alpha,12alpha-trihydroxy-24-oxo-5beta-cholestan-26-oyl-CoA + CoA. Inhibited by acetyl-CoA. Functionally, catalyzes the thiolytic cleavage of 3-ketoacyl-CoA with 8-16 carbon residues in the acyl group using a ping-pong mechanism whereby binding to 3-ketooctanoyl-CoA results in the release of acetyl-CoA and the subsequent addition of CoA produces 3-ketohexanohyl-CoA. Involved in the biosynthesis of the dauer pheromone by providing short chains of fatty acid that are attached to the ascarylose sugars of the pheromone. This chain is Non-specific lipid-transfer protein-like 2, found in Caenorhabditis elegans.